The primary structure comprises 454 residues: MVDCPRYSLSGVAASFLFVLLTIKHPDDFRVVGPNLPILAKVGEDALLTCQLLPKRTTAHMEVRWYRSDPDMPVIMYRDGAEVTGLPMEGYGGRAEWMEDSTEEGSVALKIRQVQPSDDGQYWCRFQEGDYWRETSVLLQVAALGSSPNIHVEGLGEGEVQLVCTSRGWFPEPEVHWEGIWGEKLMSFSENHVPGEDGLFYVEDTLMVRNDSVETISCFIYSHGLRETQEATIALSERLQTELASVSVIGHSQPSPVQVGENIELTCHLSPQTDAQNLEVRWLRSRYYPAVHVYANGTHVAGEQMVEYKGRTSLVTDAIHEGKLTLQIHNARTSDEGQYRCLFGKDGVYQEARVDVQVMAVGSTPRITREVLKDGGMQLRCTSDGWFPRPHVQWRDRDGKTMPSFSEAFQQGSQELFQVETLLLVTNGSMVNVTCSISLPLGQEKTARFPLSGW.

Residues 1–6 (MVDCPR) lie on the Cytoplasmic side of the membrane. A helical; Signal-anchor for type II membrane protein membrane pass occupies residues 7 to 23 (YSLSGVAASFLFVLLTI). The Extracellular segment spans residues 24 to 454 (KHPDDFRVVG…KTARFPLSGW (431 aa)). 4 Ig-like V-type domains span residues 27–140 (DDFR…VLLQ), 148–234 (PNIH…ATIA), 244–355 (ASVS…ARVD), and 365–452 (PRIT…FPLS). Intrachain disulfides connect C50/C124, C164/C218, C267/C341, and C381/C435. 4 N-linked (GlcNAc...) asparagine glycosylation sites follow: N210, N296, N427, and N432.

Belongs to the immunoglobulin superfamily. BTN/MOG family. Highly expressed in intestine and at reduced levels in lung and stomach. Also expressed in thymus, spleen, lymph nodes, T-cells, B-cells, and macrophages.

The protein resides in the membrane. Functionally, negative regulator of T-cell proliferation. The protein is Butyrophilin-like protein 2 of Mus musculus (Mouse).